Consider the following 144-residue polypeptide: HTH-type transcriptional regulator LrpC (144 aa).

An HTH asnC-type domain is found at 3-64 (LDQIDLNIIE…EVDQKKLGLP (62 aa)). Residues 22 to 41 (MRELGRKIKLSPPSVTERVR) constitute a DNA-binding region (H-T-H motif).

Transcriptional regulator with a possible role in regulation of amino acid metabolism. Plays a role in the growth phase transition. The sequence is that of HTH-type transcriptional regulator LrpC (lrpC) from Bacillus subtilis (strain 168).